The sequence spans 274 residues: Large ribosomal subunit protein uL2 (274 aa).

The tract at residues 223 to 256 (VAMNPVDHPHGGGEGRTSGGRHPVTPWGIPTKGY) is disordered.

It belongs to the universal ribosomal protein uL2 family. Part of the 50S ribosomal subunit. Forms a bridge to the 30S subunit in the 70S ribosome.

One of the primary rRNA binding proteins. Required for association of the 30S and 50S subunits to form the 70S ribosome, for tRNA binding and peptide bond formation. It has been suggested to have peptidyltransferase activity; this is somewhat controversial. Makes several contacts with the 16S rRNA in the 70S ribosome. This chain is Large ribosomal subunit protein uL2, found in Trichlorobacter lovleyi (strain ATCC BAA-1151 / DSM 17278 / SZ) (Geobacter lovleyi).